The sequence spans 371 residues: tRNA-specific 2-thiouridylase MnmA (371 aa).

ATP is bound by residues 7–14 (AMSGGVDS) and leucine 33. The active-site Nucleophile is the cysteine 101. Cysteine 101 and cysteine 213 form a disulfide bridge. Glycine 125 is a binding site for ATP. The interaction with tRNA stretch occupies residues 163–165 (KDQ). Cysteine 213 (cysteine persulfide intermediate) is an active-site residue.

This sequence belongs to the MnmA/TRMU family.

The protein resides in the cytoplasm. It carries out the reaction S-sulfanyl-L-cysteinyl-[protein] + uridine(34) in tRNA + AH2 + ATP = 2-thiouridine(34) in tRNA + L-cysteinyl-[protein] + A + AMP + diphosphate + H(+). Catalyzes the 2-thiolation of uridine at the wobble position (U34) of tRNA, leading to the formation of s(2)U34. The chain is tRNA-specific 2-thiouridylase MnmA from Roseiflexus castenholzii (strain DSM 13941 / HLO8).